The chain runs to 169 residues: Cytochrome c-type biogenesis protein CcmE (169 aa).

Topologically, residues 1 to 7 (MTRKSRR) are cytoplasmic. A helical; Signal-anchor for type II membrane protein membrane pass occupies residues 8–28 (LILIAACGAVLALALGLILSA). The Periplasmic segment spans residues 29-169 (MSGSIVFFRS…DATLGQRSER (141 aa)). The heme site is built by H122 and Y126. Positions 135–169 (LKAQGRWQEGGGKEAPKDAAKPASADATLGQRSER) are disordered. The span at 145-154 (GGKEAPKDAA) shows a compositional bias: basic and acidic residues.

Belongs to the CcmE/CycJ family.

The protein localises to the cell inner membrane. Its function is as follows. Heme chaperone required for the biogenesis of c-type cytochromes. Transiently binds heme delivered by CcmC and transfers the heme to apo-cytochromes in a process facilitated by CcmF and CcmH. The chain is Cytochrome c-type biogenesis protein CcmE from Methylorubrum populi (strain ATCC BAA-705 / NCIMB 13946 / BJ001) (Methylobacterium populi).